Reading from the N-terminus, the 148-residue chain is Cathelicidin-1 (148 aa).

Residues Met-1–Ala-17 form the signal peptide. A propeptide spanning residues Leu-18–Val-122 is cleaved from the precursor. 2 disulfide bridges follow: Cys-75-Cys-86 and Cys-97-Cys-114.

The protein belongs to the cathelicidin family. In terms of tissue distribution, detected in gizzard, liver, small intestine, large intestine, cloaca, bursa of Fabricius, gall bladder, lung, trachea, kidney, testis and bone marrow.

Its subcellular location is the secreted. Binds bacterial lipopolysaccharide (LPS). Has potent antimicrobial activity against Gram-positive and Gram-negative bacteria (in vitro). Has hemolytic activity (in vitro). May play a role in the innate immune response. The sequence is that of Cathelicidin-1 (CATHL1) from Gallus gallus (Chicken).